A 341-amino-acid chain; its full sequence is Thromboxane A2 receptor (341 aa).

Residues 1–29 (MWLNSTSLGACFRPVNITLQERRAIASPW) lie on the Extracellular side of the membrane. Asn4 and Asn16 each carry an N-linked (GlcNAc...) asparagine glycan. Residues 30 to 52 (FAASFCALGLGSNLLALSVLAGA) traverse the membrane as a helical segment. Residues 53–65 (RPGAGPRSSFLAL) lie on the Cytoplasmic side of the membrane. Residues 66–86 (LCGLVLTDFLGLLVTGAVVAS) form a helical membrane-spanning segment. Over 87–105 (QHAALLDWRATDPGCRLCH) the chain is Extracellular. A disulfide bond links Cys104 and Cys181. Residues 106 to 127 (FMGAAMVFFGLCPLLLGAAMAA) form a helical membrane-spanning segment. Topologically, residues 128–147 (ERFVGITRPFSRPAATSRRA) are cytoplasmic. The chain crosses the membrane as a helical span at residues 148–170 (WATVGLVWVGAGTLGLLPLLGLG). Residues 171 to 191 (RYSVQYPGSWCFLTLGAERGD) are Extracellular-facing. Residues 192–217 (VAFGLMFALLGSVSVGLSLLLNTVSV) form a helical membrane-spanning segment. At 218 to 244 (ATLCRVYHAREATQRPRDCEVEMMVQL) the chain is on the cytoplasmic side. A helical membrane pass occupies residues 245-268 (VGIMVVATVCWMPLLVFILQTLLQ). The Extracellular portion of the chain corresponds to 269–287 (TLPVMSPSGQLLRTTERQL). The helical transmembrane segment at 288-309 (LIYLRVATWNQILDPWVYILFR) threads the bilayer. Residues 310–341 (RSVLRRLHPRFTSQLQAVSLHSPPTQAMLSGP) lie on the Cytoplasmic side of the membrane. The residue at position 328 (Ser328) is a Phosphoserine.

It belongs to the G-protein coupled receptor 1 family. Interacts with RPGRIP1L. Interacts with RACK1; the interaction regulates TBXA2R cell surface expression. As to expression, in the brain, expressed in all types of glial cells. In the kidney, expressed in the mesangial cells of the glomerulus, smooth muscle cells of the renal arterioles, and in transitional cell epithelium of renal pelvis.

It localises to the cell membrane. Functionally, receptor for thromboxane A2 (TXA2), a potent stimulator of platelet aggregation. The activity of this receptor is mediated by a G-protein that activates a phosphatidylinositol-calcium second messenger system. In the kidney, the binding of TXA2 to glomerular TP receptors causes intense vasoconstriction. Activates phospholipase C and adenylyl cyclase. The polypeptide is Thromboxane A2 receptor (Tbxa2r) (Rattus norvegicus (Rat)).